The primary structure comprises 740 residues: Alpha-1,6-mannosylglycoprotein 6-beta-N-acetylglucosaminyltransferase A (740 aa).

Residues 1–13 lie on the Cytoplasmic side of the membrane; that stretch reads MAFFSPWKLSSQK. The helical; Signal-anchor for type II membrane protein transmembrane segment at 14–30 threads the bilayer; that stretch reads LGFFLVTFGFIWGMMLL. Topologically, residues 31 to 740 are lumenal; that stretch reads HFTIQQRTQP…GQVALCKDCL (710 aa). N-linked (GlcNAc...) asparagine glycosylation is found at Asn109, Asn114, and Asn117. Cystine bridges form between Cys144/Cys182, Cys155/Cys195, Cys171/Cys337, Cys371/Cys625, Cys648/Cys723, Cys652/Cys725, Cys659/Cys712, Cys680/Cys701, and Cys736/Cys739. Positions 212-740 are sufficient for catalytic activity; it reads NSLAEIRTDF…GQVALCKDCL (529 aa). The N-linked (GlcNAc...) asparagine glycan is linked to Asn333. Residue 377-378 coordinates substrate; sequence DS. Asn432 and Asn446 each carry an N-linked (GlcNAc...) asparagine glycan. Glu525 serves as a coordination point for UDP-N-acetyl-alpha-D-glucosamine. Residue Lys553 participates in substrate binding.

Belongs to the glycosyltransferase 18 family. N-glycosylated. Post-translationally, a secreted form is released from the membrane after cleavage by gamma-secretase. In terms of tissue distribution, detected in kidney (at protein level). Detected in kidney.

It is found in the golgi apparatus membrane. It localises to the secreted. It carries out the reaction N(4)-{beta-D-GlcNAc-(1-&gt;2)-[beta-D-GlcNAc-(1-&gt;4)]-alpha-D-Man-(1-&gt;3)-[beta-D-GlcNAc-(1-&gt;2)-alpha-D-Man-(1-&gt;6)]-beta-D-Man-(1-&gt;4)-beta-D-GlcNAc-(1-&gt;4)-beta-D-GlcNAc}-L-asparaginyl-[protein] + UDP-N-acetyl-alpha-D-glucosamine = N(4)-{beta-D-GlcNAc-(1-&gt;2)-[beta-D-GlcNAc-(1-&gt;4)]-alpha-D-Man-(1-&gt;3)-[beta-D-GlcNAc-(1-&gt;2)-[beta-D-GlcNAc-(1-&gt;6)]-alpha-D-Man-(1-&gt;6)]-beta-D-Man-(1-&gt;4)-beta-D-GlcNAc-(1-&gt;4)-beta-D-GlcNAc}-L-asparaginyl-[protein] + UDP + H(+). It participates in protein modification; protein glycosylation. Its function is as follows. Catalyzes the addition of N-acetylglucosamine (GlcNAc) in beta 1-6 linkage to the alpha-linked mannose of biantennary N-linked oligosaccharides. Catalyzes an important step in the biosynthesis of branched, complex-type N-glycans, such as those found on EGFR, TGFR (TGF-beta receptor) and CDH2. Via its role in the biosynthesis of complex N-glycans, plays an important role in the activation of cellular signaling pathways, reorganization of the actin cytoskeleton, cell-cell adhesion and cell migration. MGAT5-dependent EGFR N-glycosylation enhances the interaction between EGFR and LGALS3 and thereby prevents rapid EGFR endocytosis and prolongs EGFR signaling. Required for efficient interaction between TGFB1 and its receptor. Enhances activation of intracellular signaling pathways by several types of growth factors, including FGF2, PDGF, IGF, TGFB1 and EGF. MGAT5-dependent CDH2 N-glycosylation inhibits CDH2-mediated homotypic cell-cell adhesion and contributes to the regulation of downstream signaling pathways. Promotes cell migration. Contributes to the regulation of the inflammatory response. MGAT5-dependent TCR N-glycosylation enhances the interaction between TCR and LGALS3, limits agonist-induced TCR clustering, and thereby dampens TCR-mediated responses to antigens. Required for normal leukocyte evasation and accumulation at sites of inflammation. Inhibits attachment of monocytes to the vascular endothelium and subsequent monocyte diapedesis. In terms of biological role, promotes proliferation of umbilical vein endothelial cells and angiogenesis, at least in part by promoting the release of the growth factor FGF2 from the extracellular matrix. The chain is Alpha-1,6-mannosylglycoprotein 6-beta-N-acetylglucosaminyltransferase A (Mgat5) from Rattus norvegicus (Rat).